Consider the following 138-residue polypeptide: Abscisic stress-ripening protein 5 (138 aa).

Residues 1–13 (MAEEKHHHHLFHH) are compositionally biased toward basic residues. Disordered stretches follow at residues 1-27 (MAEE…DSYG) and 106-138 (GAGG…HLFG).

This sequence belongs to the abscisic acid and water stress-induced protein family.

It localises to the nucleus. It is found in the cytoplasm. In terms of biological role, involved in tolerance to aluminum. Regulates the expression of different genes that collectively contribute to the protection of the cell in response to aluminum stress. In Oryza sativa subsp. indica (Rice), this protein is Abscisic stress-ripening protein 5.